Here is an 861-residue protein sequence, read N- to C-terminus: MTSERSRIPCLSAAAAEGTGKKQQEGRAMATLDRKVPSPEAFLGKPWSSWIDAAKLHCSDNVDLEEAGKEGGKSREVMRLNKEDMHLFGHYPAHDDFYLVVCSACNQVVKPQVFQSHCERRHGSMCRPSPSPVSPASNPRTSLVQVKTKACLSGHHSASSTSKPFKTPKDNLLTSSSKQHTVFPAKGSRDKPCVPVPVVSLEKIPNLVKADGANVKMNSTTTTAVSASSTSSSAVSTPPLIKPVLMSKSVPPSPEKILNGKGILPTTIDKKHQNGTKNSNKPYRRLSEREFDPNKHCGVLDPETKKPCTRSLTCKTHSLSHRRAVPGRKKQFDLLLAEHKAKSREKEVKDKEHLLTSTREILPSQSGPAQDSLLGSSGSSGPEPKVASPAKSRPPNSVLPRPSSANSISSSTSSNHSGHTPEPPLPPVGGDLASRLSSDEGEMDGADESEKLDCQFSTHHPRPLAFCSFGSRLMGRGYYVFDRRWDRFRFALNSMVEKHLNSQMWKKIPPAADSPLPSPAAHITTPVPASVLQPFSNPSAVYLPSAPISSRLTSSYIMTSAMLSNAAFVTSPDPSALMSHTTAFPHVAATLSIMDSTFKAPSAVSPIPAVIPSPSHKPSKTKTSKSSKVKDLSTRSDESPSNKKRKPQSSTSSSSSSSSSSLQTSLSSPLSGPHKKNCVLNASSALNSYQAAPPYNSLSVHNSNNGVSPLSAKLEPSGRTSLPGGPADIVRQVGAVGGSSDSCPLSVPSLALHAGDLSLASHNAVSSLPLSFDKSEGKKRKNSSSSSKACKITKMPGMNSVHKKNPPSLLAPVPDPVNSTSSRQVGKNSSLALSQSSPSSISSPGHSRQNTNRTGRIRTLP.

Disordered stretches follow at residues 1–31 (MTSE…AMAT), 154–189 (GHHS…KGSR), 342–448 (KSRE…GADE), 606–673 (PIPA…LSGP), and 772–861 (FDKS…RTLP). Residues 284–351 (RRLSEREFDP…KSREKEVKDK (68 aa)) enclose the SCA7 domain. Residues 342–354 (KSREKEVKDKEHL) show a composition bias toward basic and acidic residues. Residues 355–369 (LTSTREILPSQSGPA) are compositionally biased toward polar residues. Composition is skewed to low complexity over residues 372–381 (SLLGSSGSSG), 403–417 (SSAN…SNHS), and 606–616 (PIPAVIPSPSH). The segment covering 617-627 (KPSKTKTSKSS) has biased composition (basic residues). Over residues 628-641 (KVKDLSTRSDESPS) the composition is skewed to basic and acidic residues. Low complexity-rich tracts occupy residues 648–671 (QSST…SPLS) and 783–794 (SSSSSKACKITK). The span at 817 to 828 (VNSTSSRQVGKN) shows a compositional bias: polar residues. Residues 829–847 (SSLALSQSSPSSISSPGHS) show a composition bias toward low complexity.

This Homo sapiens (Human) protein is Ataxin-7-like protein 1 (ATXN7L1).